The sequence spans 462 residues: Fumarate hydratase class II (462 aa).

Substrate contacts are provided by residues 97-99, 127-130, 137-139, and threonine 185; these read SGT, HPND, and SSN. Histidine 186 acts as the Proton donor/acceptor in catalysis. Serine 316 is an active-site residue. Substrate-binding positions include serine 317 and 322 to 324; that span reads KVN.

Belongs to the class-II fumarase/aspartase family. Fumarase subfamily. In terms of assembly, homotetramer.

Its subcellular location is the cytoplasm. It catalyses the reaction (S)-malate = fumarate + H2O. Its pathway is carbohydrate metabolism; tricarboxylic acid cycle; (S)-malate from fumarate: step 1/1. Functionally, involved in the TCA cycle. Catalyzes the stereospecific interconversion of fumarate to L-malate. The sequence is that of Fumarate hydratase class II from Halalkalibacterium halodurans (strain ATCC BAA-125 / DSM 18197 / FERM 7344 / JCM 9153 / C-125) (Bacillus halodurans).